A 1107-amino-acid chain; its full sequence is DNA polymerase delta catalytic subunit (1107 aa).

The segment at 1–34 is disordered; the sequence is MDGKRRPGPGPGVPPKRARGGLWDDDDAPRPSQF. Residues 4 to 19 carry the Nuclear localization signal motif; it reads KRRPGPGPGVPPKRAR. Arginine 19 is modified (omega-N-methylarginine). A Glycyl lysine isopeptide (Lys-Gly) (interchain with G-Cter in SUMO2) cross-link involves residue lysine 574. Residues cysteine 1012, cysteine 1015, cysteine 1026, and cysteine 1029 each contribute to the Zn(2+) site. A CysA-type zinc finger spans residues 1012–1029; that stretch reads CIGCRTVLSHQGAVCEFC. Cysteine 1058, cysteine 1061, cysteine 1071, and cysteine 1076 together coordinate [4Fe-4S] cluster. Residues 1058 to 1076 carry the CysB motif motif; that stretch reads CQRCQGSLHEDVICTSRDC.

Belongs to the DNA polymerase type-B family. In terms of assembly, component of the tetrameric DNA polymerase delta complex (Pol-delta4), which consists of POLD1/p125, POLD2/p50, POLD3/p66/p68 and POLD4/p12, with POLD1 bearing both DNA polymerase and 3' to 5' proofreading exonuclease activities. Within Pol-delta4, directly interacts with POLD2 and POLD4. Following genotoxic stress by DNA-damaging agents, such as ultraviolet light and methyl methanesulfonate, or by replication stress induced by treatment with hydroxyurea or aphidicolin, Pol-delta4 is converted into a trimeric form of the complex (Pol-delta3) by POLD4 degradation. Pol-delta3 is the major form at S phase replication sites and DNA damage sites. POLD1 displays different catalytic properties depending upon the complex it is found in. It exhibits higher proofreading activity and fidelity than Pol-delta4, making it particularly well suited to respond to DNA damage. Directly interacts with PCNA, as do POLD3 and POLD4; this interaction stimulates Pol-delta4 polymerase activity. As POLD2 and POLD4, directly interacts with WRNIP1; this interaction stimulates DNA polymerase delta-mediated DNA synthesis, independently of the presence of PCNA. This stimulation may be due predominantly to an increase of initiation frequency and also to increased processivity. Also observed as a dimeric complex with POLD2 (Pol-delta2 complex). Pol-delta2 is relatively insensitive to the PCNA stimulation (2-5-fold) compared to Pol-delta4 that is stimulated by over 50-fold. The DNA polymerase delta complex interacts with POLDIP2; this interaction is probably mediated through direct binding to POLD2. Interacts with CIAO1. Interacts with POLDIP2. Interacts with RFC1. Requires [4Fe-4S] cluster as cofactor. As to expression, widely expressed, with high levels of expression in heart and lung.

The protein localises to the nucleus. The enzyme catalyses DNA(n) + a 2'-deoxyribonucleoside 5'-triphosphate = DNA(n+1) + diphosphate. Regulated by alteration of quaternary structure. Exhibits burst rates of DNA synthesis are about 5 times faster in the presence of POLD4 (Pol-delta4 complex) than in its absence (Pol-delta3 complex), while the affinity of the enzyme for its DNA and dNTP substrates appears unchanged. The Pol-delta3 complex is more likely to proofread DNA synthesis because it cleaves single-stranded DNA twice as fast and transfers mismatched DNA from the polymerase to the exonuclease sites 9 times faster compared to the Pol-delta3 complex. Pol-delta3 also extends mismatched primers 3 times more slowly in the absence of POLD4. The conversion of Pol-delta4 into Pol-delta3 is induced by genotoxic stress or by replication stress leading POLD4 degradation. Stimulated in the presence of PCNA. This stimulation is further increased in the presence of KCTD13/PDIP1, most probably via direct interaction between KCTD13 and POLD2. In terms of biological role, as the catalytic component of the trimeric (Pol-delta3 complex) and tetrameric DNA polymerase delta complexes (Pol-delta4 complex), plays a crucial role in high fidelity genome replication, including in lagging strand synthesis, and repair. Exhibits both DNA polymerase and 3'- to 5'-exonuclease activities. Requires the presence of accessory proteins POLD2, POLD3 and POLD4 for full activity. Depending upon the absence (Pol-delta3) or the presence of POLD4 (Pol-delta4), displays differences in catalytic activity. Most notably, expresses higher proofreading activity in the context of Pol-delta3 compared with that of Pol-delta4. Although both Pol-delta3 and Pol-delta4 process Okazaki fragments in vitro, Pol-delta3 may be better suited to fulfill this task, exhibiting near-absence of strand displacement activity compared to Pol-delta4 and stalling on encounter with the 5'-blocking oligonucleotides. Pol-delta3 idling process may avoid the formation of a gap, while maintaining a nick that can be readily ligated. Along with DNA polymerase kappa, DNA polymerase delta carries out approximately half of nucleotide excision repair (NER) synthesis following UV irradiation. Under conditions of DNA replication stress, in the presence of POLD3 and POLD4, may catalyze the repair of broken replication forks through break-induced replication (BIR). Involved in the translesion synthesis (TLS) of templates carrying O6-methylguanine, 8oxoG or abasic sites. This is DNA polymerase delta catalytic subunit from Homo sapiens (Human).